We begin with the raw amino-acid sequence, 171 residues long: UPF0098 protein aq_1250 (171 aa).

It belongs to the UPF0098 family.

This chain is UPF0098 protein aq_1250, found in Aquifex aeolicus (strain VF5).